We begin with the raw amino-acid sequence, 134 residues long: Cytochrome b (134 aa).

3 helical membrane passes run 33-53 (FGSL…FLAM), 77-98 (WLLR…YLHV), and 113-133 (WNVG…GYVL). Residues histidine 83 and histidine 97 each contribute to the heme b site.

This sequence belongs to the cytochrome b family. As to quaternary structure, the cytochrome bc1 complex contains 11 subunits: 3 respiratory subunits (MT-CYB, CYC1 and UQCRFS1), 2 core proteins (UQCRC1 and UQCRC2) and 6 low-molecular weight proteins (UQCRH/QCR6, UQCRB/QCR7, UQCRQ/QCR8, UQCR10/QCR9, UQCR11/QCR10 and a cleavage product of UQCRFS1). This cytochrome bc1 complex then forms a dimer. The cofactor is heme b.

The protein resides in the mitochondrion inner membrane. Functionally, component of the ubiquinol-cytochrome c reductase complex (complex III or cytochrome b-c1 complex) that is part of the mitochondrial respiratory chain. The b-c1 complex mediates electron transfer from ubiquinol to cytochrome c. Contributes to the generation of a proton gradient across the mitochondrial membrane that is then used for ATP synthesis. The chain is Cytochrome b (MT-CYB) from Chiroderma trinitatum (Little big-eyed bat).